The sequence spans 654 residues: MSDVLLKVEDLTRRFVSGDESLTVLNHINLEIKRGEMVAIVGASGSGKSTLMNVLGCLDKPSSGRYFINGQDVSTLESDQLAELRREYFGFIFQRYHLLGDLTAVANVEVPAVYAGVPHRQRTERAQSLLARLGLEDRLTHKPSQLSGGQQQRVSVARALMNGGEVILADEPTGALDSHSGQEMMALLKELHQLGHTIILVTHDMNVANFADRIIEIKDGEIIADTLNAQVVINEQAAKTPSASFHRPAQAVSKWWKWDSFIDALKMALLAMSSHRMRTFLTMLGIIIGIASVVSVVALGNGSQQQILSNISSMGTNTIDVRPGKGFGDRRSGRVKTLTADDAKSLESLPFVDSVTPSLSNSLTVRYANQDATASVEGVGEDYFRVRGYEIAKGQFWDEESVNSLAQEAVIDDNTRKEMFADRNPIGEVIFLGSLPVRIVGVTQKKEDAFGNSDALKIWVPYTTMSGRMMGQRYLNGITVRIDENAPSAAVEQSIINLLKMRHGTEDFFTINTDTIRQSIEKTTATMTLLISAIAVISLIVGGIGVMNIMLVSVTERTKEIGVRMAVGARQADILRQFLIEAVLVCLCGGIAGIGLAFLIGFAFSTSGSSFQMIYSMNSIIWAFICSTLIGIAFGFLPARNAAKLDPIEALARD.

The ABC transporter domain maps to 6–244; it reads LKVEDLTRRF…EQAAKTPSAS (239 aa). 42–49 contacts ATP; the sequence is GASGSGKS. The next 4 membrane-spanning stretches (helical) occupy residues 280–300, 529–549, 584–604, and 619–639; these read FLTM…VALG, LLIS…VMNI, LVCL…GFAF, and SIIW…FLPA.

The protein belongs to the ABC transporter superfamily. Macrolide exporter (TC 3.A.1.122) family. Homodimer. Part of the tripartite efflux system MacAB-TolC, which is composed of an inner membrane transporter, MacB, a periplasmic membrane fusion protein, MacA, and an outer membrane component, TolC. The complex forms a large protein conduit and can translocate molecules across both the inner and outer membranes. Interacts with MacA.

It is found in the cell inner membrane. Part of the tripartite efflux system MacAB-TolC. MacB is a non-canonical ABC transporter that contains transmembrane domains (TMD), which form a pore in the inner membrane, and an ATP-binding domain (NBD), which is responsible for energy generation. Confers resistance against macrolides. The protein is Macrolide export ATP-binding/permease protein MacB of Vibrio parahaemolyticus serotype O3:K6 (strain RIMD 2210633).